The chain runs to 412 residues: Nucleoside transporter 1 (412 aa).

Positions 1–21 are disordered; sequence MSKIKESSSGILGASNNTNKE. At 1–29 the chain is on the cytoplasmic side; that stretch reads MSKIKESSSGILGASNNTNKESSQKSARS. Positions 7–21 are enriched in polar residues; that stretch reads SSSGILGASNNTNKE. Residues 30 to 50 form a helical membrane-spanning segment; the sequence is IALPMTYALIGVSCLNVWNSA. Residues 51–56 lie on the Extracellular side of the membrane; the sequence is LGLNIK. Residues 57–77 form a helical membrane-spanning segment; it reads ITYNIFQMAGLLTSSVLALFV. At 78–81 the chain is on the cytoplasmic side; that stretch reads NYPR. The chain crosses the membrane as a helical span at residues 82–102; sequence VLLPTSLGVLTLLCAGFQIAH. Topologically, residues 103–114 are extracellular; it reads QTFSDSAFDTYC. Residues 115-135 form a helical membrane-spanning segment; that stretch reads LAAFITIGLMAGIAQTIAFAI. The Cytoplasmic segment spans residues 136-144; it reads GTTKESNMS. A helical transmembrane segment spans residues 145–165; that stretch reads GYISAGIGMSGVLIFCINLIL. The Extracellular portion of the chain corresponds to 166–181; it reads DYIVSDEKIYEINKSK. A helical membrane pass occupies residues 182 to 202; sequence LLCLFSISEIFLIITIVCCVL. Topologically, residues 203-240 are cytoplasmic; that stretch reads YIDLFPKNDNNKDSTDIEKAEEKEGRLPLIEIIKDGYK. The chain crosses the membrane as a helical span at residues 241-261; the sequence is AILSIFLVNWLSLQLFPGIGH. Over 262-271 the chain is Extracellular; that stretch reads KKWQEKHGMT. The chain crosses the membrane as a helical span at residues 272-294; the sequence is DNNVTIIVGMFQVFDFISRYPPN. The Cytoplasmic segment spans residues 295 to 310; that stretch reads FTHIKIFKYFTFSLNT. The helical transmembrane segment at 311-331 threads the bilayer; sequence LLIGNFLRLLFIPWFVLNAVI. The Extracellular segment spans residues 332–343; it reads SSSFFTNIVQQC. The helical transmembrane segment at 344–364 threads the bilayer; the sequence is VCIAALAFTNGWFNTVPFIVF. Over 365–382 the chain is Cytoplasmic; the sequence is VKELKKVKHQKDIETISR. The helical transmembrane segment at 383-403 threads the bilayer; sequence IMVVSLFFGLFFGMLTTCLYD. Residues 404 to 412 are Extracellular-facing; the sequence is YFPIGILNN.

Belongs to the SLC29A/ENT transporter (TC 2.A.57) family.

It localises to the cell membrane. The catalysed reaction is inosine(in) = inosine(out). It catalyses the reaction adenosine(in) = adenosine(out). The enzyme catalyses hypoxanthine(out) = hypoxanthine(in). It carries out the reaction guanosine(in) = guanosine(out). The catalysed reaction is guanine(out) = guanine(in). It catalyses the reaction thymidine(in) = thymidine(out). The enzyme catalyses uridine(out) = uridine(in). It carries out the reaction uracil(in) = uracil(out). The catalysed reaction is thymine(out) = thymine(in). It catalyses the reaction adenine(out) = adenine(in). The enzyme catalyses cytosine(out) = cytosine(in). It carries out the reaction xanthine(out) = xanthine(in). Functionally, nucleoside and nucleobase transporter with a broad substrate specificity. The protein is Nucleoside transporter 1 of Plasmodium berghei (strain Anka).